Here is a 221-residue protein sequence, read N- to C-terminus: Ribosomal RNA large subunit methyltransferase E (221 aa).

S-adenosyl-L-methionine contacts are provided by G60, W62, D89, D105, and D134. Catalysis depends on K174, which acts as the Proton acceptor. The tract at residues 199–221 (KPKASRDKSSETFLLGRQLKHPG) is disordered.

Belongs to the class I-like SAM-binding methyltransferase superfamily. RNA methyltransferase RlmE family.

The protein localises to the cytoplasm. It carries out the reaction uridine(2552) in 23S rRNA + S-adenosyl-L-methionine = 2'-O-methyluridine(2552) in 23S rRNA + S-adenosyl-L-homocysteine + H(+). Specifically methylates the uridine in position 2552 of 23S rRNA at the 2'-O position of the ribose in the fully assembled 50S ribosomal subunit. In Ralstonia pickettii (strain 12J), this protein is Ribosomal RNA large subunit methyltransferase E.